The chain runs to 382 residues: F-box/LRR-repeat/kelch-repeat protein At1g09650 (382 aa).

Residues 7–52 (CLMMESLPHEVVECILERLDADPLLRFKAVSKQWKSTIESPFFQRR) enclose the F-box domain. Residues 78–101 (IEALTTLVLGSSSSVKIPTPWEEE) form an LRR 1 repeat. The Kelch 1 repeat unit spans residues 180–227 (PVWLYNSIEIGLENATTCEVFDFSTNAWRYVSPAAPYRIVGCPAPVCV). One copy of the LRR 2 repeat lies at 239–262 (ETKILSFDLHTETFQVVSKAPFAN). The stretch at 270-319 (MCNLDNRLCVSEMKLPNQVIWSFNSGNKTWHKMCSINLDITSRWFGPTQV) is one Kelch 2 repeat.

This Arabidopsis thaliana (Mouse-ear cress) protein is F-box/LRR-repeat/kelch-repeat protein At1g09650.